A 183-amino-acid polypeptide reads, in one-letter code: Threonylcarbamoyl-AMP synthase (183 aa).

The YrdC-like domain occupies 1-183; the sequence is MNITQIIEKL…LFTNQLVRQG (183 aa).

This sequence belongs to the SUA5 family. TsaC subfamily.

The protein resides in the cytoplasm. It carries out the reaction L-threonine + hydrogencarbonate + ATP = L-threonylcarbamoyladenylate + diphosphate + H2O. Functionally, required for the formation of a threonylcarbamoyl group on adenosine at position 37 (t(6)A37) in tRNAs that read codons beginning with adenine. Catalyzes the conversion of L-threonine, HCO(3)(-)/CO(2) and ATP to give threonylcarbamoyl-AMP (TC-AMP) as the acyladenylate intermediate, with the release of diphosphate. The protein is Threonylcarbamoyl-AMP synthase of Histophilus somni (strain 129Pt) (Haemophilus somnus).